The primary structure comprises 178 residues: Cysteine protease inhibitor 7 (178 aa).

Cystine bridges form between Cys-41–Cys-93 and Cys-141–Cys-147.

The protein belongs to the protease inhibitor I3 (leguminous Kunitz-type inhibitor) family.

It is found in the vacuole. In terms of biological role, inhibitor of cysteine proteases. May protect the plant by inhibiting proteases of invading organisms. The protein is Cysteine protease inhibitor 7 of Solanum tuberosum (Potato).